Consider the following 485-residue polypeptide: Sperm-associated antigen 8 (485 aa).

3 disordered regions span residues 1-42 (METN…SPRS), 75-98 (KTPAPCSEFMEPSSDPSLLGEPCA), and 127-215 (TTTD…CIPP). The segment covering 132 to 150 (SSNPGPVPGSSSGPVLGSS) has biased composition (low complexity). The segment covering 151-191 (SGAGHGSGSGSGPGCGSVPGSGSGPGPGSGPGSGPGHGSGS) has biased composition (gly residues). Mn stretches follow at residues 327–340 (SSTTQKDSYQPPGN) and 379–393 (ESVTHHDYRMELAQA).

This sequence belongs to the SPAG8 family. In terms of assembly, microtubule inner protein component of sperm flagellar doublet microtubules. Interacts with FHL5 (via second LIM domain). Interacts with RANBP9. As to expression, expressed in testis (germ cells), but not in liver, kidney, prostate and small intestine. Expressed in airway epithelial cells.

Its subcellular location is the cytoplasm. It is found in the nucleus. The protein resides in the cytoplasmic vesicle. The protein localises to the secretory vesicle. It localises to the acrosome. Its subcellular location is the cytoskeleton. It is found in the microtubule organizing center. The protein resides in the spindle. The protein localises to the cilium axoneme. It localises to the flagellum axoneme. In terms of biological role, microtubule inner protein (MIP) part of the dynein-decorated doublet microtubules (DMTs) in cilia axoneme, which is required for motile cilia beating. Plays a role in spermatogenesis by enhancing the binding of CREM isoform tau to its coactivator FHL5 and increasing the FHL5-regulated transcriptional activation of CREM isoform tau. Involved in the acrosome reaction and in binding of sperm to the zona pellucida. Plays a role in regulation of the cell cycle by controlling progression through the G2/M phase, possibly by delaying the activation of CDK1 which is required for entry into mitosis. May play a role in fertility and microtubule formation through interaction with RANBP9. This Homo sapiens (Human) protein is Sperm-associated antigen 8.